The primary structure comprises 650 residues: Threonine--tRNA ligase (650 aa).

The TGS domain maps to 1 to 66 (MVQITLPDGS…EHDAQLAIVT (66 aa)). Positions 247-538 (DHRKIGRDLD…LIENHAGAMP (292 aa)) are catalytic. Cys338, His389, and His515 together coordinate Zn(2+).

It belongs to the class-II aminoacyl-tRNA synthetase family. In terms of assembly, homodimer. The cofactor is Zn(2+).

It is found in the cytoplasm. The catalysed reaction is tRNA(Thr) + L-threonine + ATP = L-threonyl-tRNA(Thr) + AMP + diphosphate + H(+). Catalyzes the attachment of threonine to tRNA(Thr) in a two-step reaction: L-threonine is first activated by ATP to form Thr-AMP and then transferred to the acceptor end of tRNA(Thr). Also edits incorrectly charged L-seryl-tRNA(Thr). The sequence is that of Threonine--tRNA ligase from Bordetella petrii (strain ATCC BAA-461 / DSM 12804 / CCUG 43448).